Here is a 69-residue protein sequence, read N- to C-terminus: uncharacterized protein (69 aa).

Residues 32–54 (MLGAIDVAVAVASVPTLFVVTAI) form a helical membrane-spanning segment.

The protein localises to the membrane. This is an uncharacterized protein from Sinorhizobium fredii (strain NBRC 101917 / NGR234).